Consider the following 234-residue polypeptide: 7-carboxy-7-deazaguanine synthase (234 aa).

Substrate-binding positions include I36–G38 and R51. Residues F42–E234 enclose the Radical SAM core domain. C55, C59, and C62 together coordinate [4Fe-4S] cluster. T64 is a Mg(2+) binding site. Residue T100 participates in substrate binding. S-adenosyl-L-methionine is bound by residues G102, S144–K146, and Q195–D198.

Belongs to the radical SAM superfamily. 7-carboxy-7-deazaguanine synthase family. In terms of assembly, homodimer. Requires [4Fe-4S] cluster as cofactor. S-adenosyl-L-methionine is required as a cofactor. It depends on Mg(2+) as a cofactor.

The enzyme catalyses 6-carboxy-5,6,7,8-tetrahydropterin + H(+) = 7-carboxy-7-deazaguanine + NH4(+). It functions in the pathway purine metabolism; 7-cyano-7-deazaguanine biosynthesis. Functionally, catalyzes the complex heterocyclic radical-mediated conversion of 6-carboxy-5,6,7,8-tetrahydropterin (CPH4) to 7-carboxy-7-deazaguanine (CDG), a step common to the biosynthetic pathways of all 7-deazapurine-containing compounds. This Rickettsia prowazekii (strain Madrid E) protein is 7-carboxy-7-deazaguanine synthase.